Here is a 2253-residue protein sequence, read N- to C-terminus: Genome polyprotein (2253 aa).

A disulfide bridge connects residues Cys-627 and Cys-694. A Cell attachment site motif is present at residues 750–752; the sequence is RVD. The LRAT domain occupies 825–920; that stretch reads LVYKNRGFYK…LFPGRKEITQ (96 aa). Active-site for protein 2A H-NC residues include His-835 and His-846. Cys-904 (for protein 2A H-NC; Acyl-thioester intermediate) is an active-site residue. The helical transmembrane segment at 1002–1022 threads the bilayer; sequence IVLYCHAPNMLTTMCLGTLLV. Residues 1205–1366 form the SF3 helicase domain; that stretch reads YSEMMRVNVR…ASYSRNNKLD (162 aa). At Tyr-1559 the chain carries O-(5'-phospho-RNA)-tyrosine. One can recognise a Peptidase C3 domain in the interval 1586 to 1775; sequence APYMQDLEHC…RAAAVHFISN (190 aa). Residues His-1626, Asp-1664, and Cys-1739 each act as for protease 3C activity in the active site. Catalysis depends on Cys-1970, which acts as the Acyl-thioester intermediate. A RdRp catalytic domain is found at 2018-2132; it reads PYNYGLDYSS…SVSSPLDAEY (115 aa). 2 residues coordinate Mg(2+): Asp-2024 and Asp-2118.

Belongs to the picornaviruses polyprotein family. In terms of assembly, interacts with capsid protein VP1 and capsid protein VP3 to form heterotrimeric protomers. Five protomers subsequently associate to form pentamers which serve as building blocks for the capsid. As to quaternary structure, interacts with capsid protein VP0, and capsid protein VP3 to form heterotrimeric protomers. Five protomers subsequently associate to form pentamers which serve as building blocks for the capsid. Interacts with capsid protein VP0 and capsid protein VP1 to form heterotrimeric protomers. Five protomers subsequently associate to form pentamers which serve as building blocks for the capsid. In terms of assembly, homohexamer; forms a hexameric ring structure with 6-fold symmetry characteristic of AAA+ ATPases. As to quaternary structure, homodimer. Interacts with host ACBD3. Interacts with RNA-directed RNA polymerase. In terms of assembly, interacts with Viral protein genome-linked. The cofactor is Mg(2+). Post-translationally, VPg is uridylylated by the polymerase and is covalently linked to the 5'-end of genomic RNA. This uridylylated form acts as a nucleotide-peptide primer for the polymerase. In terms of processing, specific enzymatic cleavages yield mature proteins. All cleavages are catalyzed by P3C.

It is found in the virion. It localises to the host cytoplasm. The protein resides in the host nucleus. The protein localises to the host nucleolus. Its subcellular location is the host cytoplasmic vesicle membrane. It is found in the host endoplasmic reticulum membrane. It localises to the host Golgi apparatus membrane. It carries out the reaction RNA(n) + a ribonucleoside 5'-triphosphate = RNA(n+1) + diphosphate. It catalyses the reaction a ribonucleoside 5'-triphosphate + H2O = a ribonucleoside 5'-diphosphate + phosphate + H(+). The catalysed reaction is Selective cleavage of Gln-|-Gly bond in the poliovirus polyprotein. In other picornavirus reactions Glu may be substituted for Gln, and Ser or Thr for Gly.. Functionally, forms an icosahedral capsid of pseudo T=3 symmetry together with capsid proteins VP1 and VP3. The capsid is 300 Angstroms in diameter, composed of 60 copies of each capsid protein and enclosing the viral positive strand RNA genome. The attachment to the host cell receptor induces virion internalization predominantly through clathrin-mediated endocytosis. Binds packaging signals present in the viral RNA. In terms of biological role, forms an icosahedral capsid of pseudo T=3 symmetry together with capsid proteins VP0 and VP1. The capsid is 300 Angstroms in diameter, composed of 60 copies of each capsid protein and enclosing the viral positive strand RNA genome. The attachment to the host cell receptor induces virion internalization predominantly through clathrin-mediated endocytosis. Binds packaging signals present in the viral RNA. Its function is as follows. Forms an icosahedral capsid of pseudo T=3 symmetry together with capsid proteins VP0 and VP3. The capsid is 300 Angstroms in diameter, composed of 60 copies of each capsid protein and enclosing the viral positive strand RNA genome. The attachment to the host cell receptor induces virion internalization predominantly through clathrin-mediated endocytosis. Binds packaging signals present in the viral RNA. Mediates self-processing of the polyprotein by a translational effect termed 'ribosome skipping'. Mechanistically, 2A1-mediated cleavage occurs between the C-terminal glycine and the proline of the downstream protein 2A2. Functionally, plays an essential role in the virus replication cycle by acting as a viroporin. Creates a pore in the host endoplasmic reticulum and as a consequence releases Ca2+ in the cytoplasm of infected cell. In turn, high levels of cytoplasmic calcium may trigger membrane trafficking and transport of viral ER-associated proteins to viroplasms, sites of viral genome replication. In terms of biological role, induces and associates with structural rearrangements of intracellular membranes. Displays RNA-binding, nucleotide binding and NTPase activities. May play a role in virion morphogenesis and viral RNA encapsidation by interacting with the capsid protein VP3. Its function is as follows. Localizes the viral replication complex to the surface of membranous vesicles. It inhibits host cell endoplasmic reticulum-to-Golgi apparatus transport and causes the disassembly of the Golgi complex, possibly through GBF1 interaction. This would result in depletion of MHC, trail receptors and IFN receptors at the host cell surface. Plays an essential role in viral RNA replication by recruiting ACBD3 and PI4KB at the viral replication sites, thereby allowing the formation of the rearranged membranous structures where viral replication takes place. Acts as a primer for viral RNA replication and remains covalently bound to viral genomic RNA. VPg is uridylylated prior to priming replication into VPg-pUpU. The VPg-pUpU is then used as primer on the genomic RNA poly(A) by the RNA-dependent RNA polymerase to replicate the viral genome. Following genome release from the infecting virion in the cytoplasm, the VPg-RNA linkage is probably removed by host TDP2. During the late stage of the replication cycle, host TDP2 is excluded from sites of viral RNA synthesis and encapsidation, allowing for the generation of progeny virions. Functionally, cysteine protease that generates mature viral proteins from the precursor polyprotein. In addition to its proteolytic activity, it binds to viral RNA, and thus influences viral genome replication. RNA and substrate bind cooperatively to the protease. In terms of biological role, replicates the viral genomic RNA on the surface of intracellular membranes. Covalently attaches UMP to a tyrosine of VPg, which is used to prime RNA synthesis. The positive stranded RNA genome is first replicated at virus induced membranous vesicles, creating a dsRNA genomic replication form. This dsRNA is then used as template to synthesize positive stranded RNA genomes. ss(+)RNA genomes are either translated, replicated or encapsidated. This is Genome polyprotein from Ljunganvirus 1 (LV).